Reading from the N-terminus, the 242-residue chain is Probable transcriptional regulatory protein Bmul_0984/BMULJ_02280 (242 aa).

It belongs to the TACO1 family.

Its subcellular location is the cytoplasm. This is Probable transcriptional regulatory protein Bmul_0984/BMULJ_02280 from Burkholderia multivorans (strain ATCC 17616 / 249).